Consider the following 878-residue polypeptide: AP-2 complex subunit alpha (878 aa).

The protein belongs to the adaptor complexes large subunit family. In terms of assembly, adaptor protein complex 2 (AP-2) is a heterotetramer composed of two large adaptins (alpha-type subunit apl3 and beta-type subunit apl1), a medium chain (mu-type subunit apm4) and a small adaptin (sigma-type subunit aps2).

It localises to the cell membrane. The protein resides in the membrane. Its subcellular location is the coated pit. Adaptins are components of the adaptor complexes which link clathrin to receptors in coated vesicles. Clathrin-associated protein complexes are believed to interact with the cytoplasmic tails of membrane proteins, leading to their selection and concentration. Alpha adaptin is a subunit of the plasma membrane adaptor. The protein is AP-2 complex subunit alpha (apl3) of Schizosaccharomyces pombe (strain 972 / ATCC 24843) (Fission yeast).